The primary structure comprises 367 residues: MTASQRTLMVMAGGTGGHVFPGLAVAHRMEAAGWRVVWLGNPAGMEATLVPKHGIPMEYVRFGGLRGKGLKTKLTLPFNLLRACGQSLAALRRVRPDVVLGMGGYITFPAGVMTALSGRPLVLHEQNSIAGLTNKVLAKFAKRVLVAFPGALPHAEWTGNPIRAELAGTEAPKARYAARSGPLNVLVVGGSLGAAALNEVVPRALAMLTPGERPRIVHQAGAKHIEALKANYEAAGFAAGEDVRLVPFIDDMAAAYAAADLVICRSGAMTVSEIAAVGVAALFVPFPYAVDDHQTSNAAFLADAGAAVLVQQRDLSAELLADWLRGQSRASLADMAERSRSLAKPEATDEVARVCAKAAGANLETLQ.

Residues 15-17 (TGG), Asn127, Arg163, Ser191, Ile249, and Gln294 each bind UDP-N-acetyl-alpha-D-glucosamine.

It belongs to the glycosyltransferase 28 family. MurG subfamily.

It is found in the cell inner membrane. The enzyme catalyses di-trans,octa-cis-undecaprenyl diphospho-N-acetyl-alpha-D-muramoyl-L-alanyl-D-glutamyl-meso-2,6-diaminopimeloyl-D-alanyl-D-alanine + UDP-N-acetyl-alpha-D-glucosamine = di-trans,octa-cis-undecaprenyl diphospho-[N-acetyl-alpha-D-glucosaminyl-(1-&gt;4)]-N-acetyl-alpha-D-muramoyl-L-alanyl-D-glutamyl-meso-2,6-diaminopimeloyl-D-alanyl-D-alanine + UDP + H(+). Its pathway is cell wall biogenesis; peptidoglycan biosynthesis. Cell wall formation. Catalyzes the transfer of a GlcNAc subunit on undecaprenyl-pyrophosphoryl-MurNAc-pentapeptide (lipid intermediate I) to form undecaprenyl-pyrophosphoryl-MurNAc-(pentapeptide)GlcNAc (lipid intermediate II). This is UDP-N-acetylglucosamine--N-acetylmuramyl-(pentapeptide) pyrophosphoryl-undecaprenol N-acetylglucosamine transferase from Burkholderia lata (strain ATCC 17760 / DSM 23089 / LMG 22485 / NCIMB 9086 / R18194 / 383).